A 335-amino-acid polypeptide reads, in one-letter code: Probable cytosolic iron-sulfur protein assembly protein Ciao1 (335 aa).

WD repeat units lie at residues 12 to 51, 57 to 96, 101 to 140, 146 to 185, 192 to 231, 250 to 289, and 301 to 335; these read GHKGRIWGVAWHPKGNVFASCGEDKAIRIWSLTGNTWSTK, GHKRTIREIQWSPCGQYLASASFDATTAIWSKSSGEFECN, GHENEVKSVSWSRSGGLLATCSRDKSVWIWEVAGDDEFEC, SHTQDVKRVVWHPTKEILASASYDNTIKMYAEEPIDNDWD, SHTSTIWGIDFDADGERLVSCSDDTTVKIWRAYHPGNSAG, QHSRAIYDVSWCKLTGLIATACGDDGIRIFKETSDSKPDE, and AHDQDVNSVQWNPVVAGQLISCSDDGTIKIWKVTE.

It belongs to the WD repeat CIA1 family.

In terms of biological role, essential component of the cytosolic iron-sulfur (Fe/S) protein assembly machinery. Required for the maturation of extramitochondrial Fe/S proteins. The protein is Probable cytosolic iron-sulfur protein assembly protein Ciao1 of Drosophila yakuba (Fruit fly).